The sequence spans 315 residues: Ribosomal protein L11 methyltransferase (315 aa).

S-adenosyl-L-methionine is bound by residues threonine 161, glycine 182, aspartate 204, and asparagine 248.

The protein belongs to the methyltransferase superfamily. PrmA family.

The protein resides in the cytoplasm. It carries out the reaction L-lysyl-[protein] + 3 S-adenosyl-L-methionine = N(6),N(6),N(6)-trimethyl-L-lysyl-[protein] + 3 S-adenosyl-L-homocysteine + 3 H(+). Functionally, methylates ribosomal protein L11. The chain is Ribosomal protein L11 methyltransferase from Shouchella clausii (strain KSM-K16) (Alkalihalobacillus clausii).